The primary structure comprises 362 residues: Molybdenum import ATP-binding protein ModC (362 aa).

The region spanning methionine 1–aspartate 236 is the ABC transporter domain. Glycine 36–threonine 43 is a binding site for ATP. In terms of domain architecture, Mop spans aspartate 297–glycine 362.

It belongs to the ABC transporter superfamily. Molybdate importer (TC 3.A.1.8) family. In terms of assembly, the complex is composed of two ATP-binding proteins (ModC), two transmembrane proteins (ModB) and a solute-binding protein (ModA).

It localises to the cell inner membrane. It catalyses the reaction molybdate(out) + ATP + H2O = molybdate(in) + ADP + phosphate + H(+). Part of the ABC transporter complex ModABC involved in molybdenum import. Responsible for energy coupling to the transport system. This chain is Molybdenum import ATP-binding protein ModC, found in Saccharophagus degradans (strain 2-40 / ATCC 43961 / DSM 17024).